The sequence spans 117 residues: uncharacterized protein (117 aa).

This is an uncharacterized protein from Acidianus convivator (ABV).